The sequence spans 580 residues: Threonine--tRNA ligase (580 aa).

The segment at 179–476 (DHRKIGKDLN…LLEQTKGILP (298 aa)) is catalytic. Residues cysteine 272, histidine 323, and histidine 453 each contribute to the Zn(2+) site.

This sequence belongs to the class-II aminoacyl-tRNA synthetase family. In terms of assembly, homodimer. Requires Zn(2+) as cofactor.

Its subcellular location is the cytoplasm. The enzyme catalyses tRNA(Thr) + L-threonine + ATP = L-threonyl-tRNA(Thr) + AMP + diphosphate + H(+). Its function is as follows. Catalyzes the attachment of threonine to tRNA(Thr) in a two-step reaction: L-threonine is first activated by ATP to form Thr-AMP and then transferred to the acceptor end of tRNA(Thr). Also edits incorrectly charged L-seryl-tRNA(Thr). This chain is Threonine--tRNA ligase, found in Ureaplasma parvum serovar 3 (strain ATCC 27815 / 27 / NCTC 11736).